The chain runs to 425 residues: Glutamate-1-semialdehyde 2,1-aminomutase (425 aa).

Position 265 is an N6-(pyridoxal phosphate)lysine (Lys-265).

The protein belongs to the class-III pyridoxal-phosphate-dependent aminotransferase family. HemL subfamily. As to quaternary structure, homodimer. The cofactor is pyridoxal 5'-phosphate.

The protein resides in the cytoplasm. The catalysed reaction is (S)-4-amino-5-oxopentanoate = 5-aminolevulinate. Its pathway is porphyrin-containing compound metabolism; protoporphyrin-IX biosynthesis; 5-aminolevulinate from L-glutamyl-tRNA(Glu): step 2/2. This Clostridium perfringens (strain SM101 / Type A) protein is Glutamate-1-semialdehyde 2,1-aminomutase.